Here is a 534-residue protein sequence, read N- to C-terminus: High-affinity nicotinic acid transporter (534 aa).

Over 1–130 (MSNKFTMESP…DIHLVGTQYN (130 aa)) the chain is Extracellular. Residues 21-56 (SPTNDGSEEKPTEVTFQEDEGHDASLHNRSHDKKSE) form a disordered region. Ser27 bears the Phosphoserine mark. A helical membrane pass occupies residues 131 to 151 (TCVTVFFATYVLFDPIGTNLL). Position 152 (Lys152) is a topological domain, cytoplasmic. The chain crosses the membrane as a helical span at residues 153–173 (IMGPPLMMSICLTCFGAISLG). Over 174–187 (TAWVKNYAQLIVVR) the chain is Extracellular. Residues 188 to 208 (LLLGAFEGMIYPAINMYLSVC) form a helical membrane-spanning segment. Over 209–217 (YRREQYALR) the chain is Cytoplasmic. A helical membrane pass occupies residues 218-238 (FAFVFSAACLSSSFGGLIAYG). Residues 239 to 250 (CSKISGSLKDWQ) are Extracellular-facing. A helical membrane pass occupies residues 251 to 271 (YIYIVEGCISLGFVPFYAFGL). Residues 272–323 (SKNLEDSWFFNKEEKEYISERYKTMNTFDPDEKFEWFQVWQAVKDVKTWASA) lie on the Cytoplasmic side of the membrane. Lys283 participates in a covalent cross-link: Glycyl lysine isopeptide (Lys-Gly) (interchain with G-Cter in ubiquitin). The helical transmembrane segment at 324 to 344 (VALFGIDLTTFGLTVFLPIII) threads the bilayer. Residues 345–355 (TSMGFTNVRAQ) lie on the Extracellular side of the membrane. A helical membrane pass occupies residues 356–376 (LMTVPIYFLTAIVFFICAVWS). Topologically, residues 377-384 (DRIKLRSP) are cytoplasmic. Residues 385–405 (FILGACLTTSIGIAIVLGSQV) form a helical membrane-spanning segment. Topologically, residues 406–410 (HGVRY) are extracellular. Residues 411-431 (FGVYILCMGIYVNAACNCLWL) form a helical membrane-spanning segment. At 432–444 (SGNTGNYFKRATA) the chain is on the cytoplasmic side. Residues 445–465 (LGINLFFGSGSGLVSGQIFVA) form a helical membrane-spanning segment. The Extracellular portion of the chain corresponds to 466-474 (KDKPRYIKG). A helical membrane pass occupies residues 475–495 (LSISLAFQVFSIFMTVVQIFL). Topologically, residues 496–534 (YKRENDKKKAIIDRCNELGEPIPYDERLSDKNPEFKYMY) are cytoplasmic.

The protein belongs to the major facilitator superfamily. Allantoate permease family.

The protein resides in the membrane. Functionally, involved in the uptake of nicotinic acid. The sequence is that of High-affinity nicotinic acid transporter (TNA1) from Saccharomyces cerevisiae (strain ATCC 204508 / S288c) (Baker's yeast).